The sequence spans 716 residues: Polyribonucleotide nucleotidyltransferase (716 aa).

Residues Asp493 and Asp499 each contribute to the Mg(2+) site. One can recognise a KH domain in the interval 560–619; sequence PRMITIKINPEKIRDVIGKGGSVIRALTEETGTTIDISDDGVVTIASTSSEGMAEAKKRI. Residues 629–697 enclose the S1 motif domain; sequence GQVYEGTVLK…EKGRVRLSAK (69 aa).

It belongs to the polyribonucleotide nucleotidyltransferase family. Mg(2+) is required as a cofactor.

The protein localises to the cytoplasm. It catalyses the reaction RNA(n+1) + phosphate = RNA(n) + a ribonucleoside 5'-diphosphate. Involved in mRNA degradation. Catalyzes the phosphorolysis of single-stranded polyribonucleotides processively in the 3'- to 5'-direction. This is Polyribonucleotide nucleotidyltransferase from Paraburkholderia xenovorans (strain LB400).